A 200-amino-acid polypeptide reads, in one-letter code: MFNIPAVAVSYLIGSLSFAVIVSKYYGMDDPRTYGSGNPGATNVLRSGKKKAAALTLLGDAAKGLVAVLLARVLQEPLGLSDSAIAAVALAALVGHMWPVFFGFKGGKGVATALGVLLALSPATALVCALIWLVMAFGFKVSSLAALTATIAAPVAASFFMPHVSWVWATVAIALLVLFRHKSNIVKLLEGRESKIGGSR.

5 helical membrane-spanning segments follow: residues 2-22 (FNIP…AVIV), 51-71 (KAAA…VLLA), 84-104 (AIAA…FFGF), 114-134 (LGVL…IWLV), and 159-179 (FFMP…LVLF).

This sequence belongs to the PlsY family. In terms of assembly, probably interacts with PlsX.

It is found in the cell inner membrane. It carries out the reaction an acyl phosphate + sn-glycerol 3-phosphate = a 1-acyl-sn-glycero-3-phosphate + phosphate. The protein operates within lipid metabolism; phospholipid metabolism. Functionally, catalyzes the transfer of an acyl group from acyl-phosphate (acyl-PO(4)) to glycerol-3-phosphate (G3P) to form lysophosphatidic acid (LPA). This enzyme utilizes acyl-phosphate as fatty acyl donor, but not acyl-CoA or acyl-ACP. This chain is Glycerol-3-phosphate acyltransferase, found in Neisseria meningitidis serogroup B (strain ATCC BAA-335 / MC58).